The following is a 955-amino-acid chain: Eukaryotic translation initiation factor 3 subunit A (955 aa).

Residues 96–127 adopt a coiled-coil conformation; the sequence is LSLAEQRVTDAQAQADKIADEEEADDLEAEET. In terms of domain architecture, PCI spans 325-498; it reads YQRVASFVLL…RSVLFEEVRA (174 aa). Coiled coils occupy residues 533-636 and 752-860; these read AEAR…INAK and KREA…KRAG. Basic and acidic residues predominate over residues 789–858; the sequence is RAEEEAKAAA…ELEAKLEAKR (70 aa). Residues 789–955 are disordered; that stretch reads RAEEEAKAAA…GRYIPPSQRN (167 aa).

The protein belongs to the eIF-3 subunit A family. As to quaternary structure, component of the eukaryotic translation initiation factor 3 (eIF-3) complex.

The protein resides in the cytoplasm. RNA-binding component of the eukaryotic translation initiation factor 3 (eIF-3) complex, which is involved in protein synthesis of a specialized repertoire of mRNAs and, together with other initiation factors, stimulates binding of mRNA and methionyl-tRNAi to the 40S ribosome. The eIF-3 complex specifically targets and initiates translation of a subset of mRNAs involved in cell proliferation. The chain is Eukaryotic translation initiation factor 3 subunit A from Yarrowia lipolytica (strain CLIB 122 / E 150) (Yeast).